Reading from the N-terminus, the 514-residue chain is 2,3-bisphosphoglycerate-independent phosphoglycerate mutase (514 aa).

2 residues coordinate Mn(2+): aspartate 14 and serine 64. Serine 64 functions as the Phosphoserine intermediate in the catalytic mechanism. Substrate is bound by residues histidine 125, 155–156 (RD), arginine 187, arginine 193, 263–266 (RADR), and lysine 336. Residues aspartate 403, histidine 407, aspartate 444, histidine 445, and histidine 463 each contribute to the Mn(2+) site.

This sequence belongs to the BPG-independent phosphoglycerate mutase family. Monomer. Mn(2+) serves as cofactor.

The catalysed reaction is (2R)-2-phosphoglycerate = (2R)-3-phosphoglycerate. Its pathway is carbohydrate degradation; glycolysis; pyruvate from D-glyceraldehyde 3-phosphate: step 3/5. Functionally, catalyzes the interconversion of 2-phosphoglycerate and 3-phosphoglycerate. The chain is 2,3-bisphosphoglycerate-independent phosphoglycerate mutase from Shewanella sp. (strain W3-18-1).